Reading from the N-terminus, the 75-residue chain is Kappa-scoloptoxin(03)-Ssm1e (75 aa).

Positions 1 to 23 (MKSSMAILLVMALIIFTLDKNYS) are cleaved as a signal peptide.

It belongs to the scoloptoxin-03 family. In terms of processing, contains 3 disulfide bonds. As to expression, expressed by the venom gland.

The protein localises to the secreted. Inhibits voltage-gated potassium channels. In Scolopendra mutilans (Chinese red-headed centipede), this protein is Kappa-scoloptoxin(03)-Ssm1e.